Reading from the N-terminus, the 158-residue chain is MASKKVYELTQSGLDQLKDELTHLKDVKRVENLEALKEAREQGDLSENADYDAARNEQARIEARILEIESILKNVKIIRTNDDSTTVNIGKKVLLHFVEKNKDVEYHVVGTIEADPKNFKISIESPLGRAIKGKEVGDLVQIKSATNKQSNVEIKAIS.

The stretch at 14 to 76 (LDQLKDELTH…EIESILKNVK (63 aa)) forms a coiled coil.

It belongs to the GreA/GreB family.

Necessary for efficient RNA polymerase transcription elongation past template-encoded arresting sites. The arresting sites in DNA have the property of trapping a certain fraction of elongating RNA polymerases that pass through, resulting in locked ternary complexes. Cleavage of the nascent transcript by cleavage factors such as GreA or GreB allows the resumption of elongation from the new 3'terminus. GreA releases sequences of 2 to 3 nucleotides. The sequence is that of Transcription elongation factor GreA from Acholeplasma laidlawii (strain PG-8A).